Here is a 226-residue protein sequence, read N- to C-terminus: Ribosome-recycling factor, mitochondrial (226 aa).

It belongs to the RRF family.

The protein localises to the mitochondrion. In terms of biological role, necessary for protein synthesis in mitochondria. Functions as a ribosome recycling factor in mitochondria. The sequence is that of Ribosome-recycling factor, mitochondrial (RRF1) from Eremothecium gossypii (strain ATCC 10895 / CBS 109.51 / FGSC 9923 / NRRL Y-1056) (Yeast).